The primary structure comprises 252 residues: Protein BTG3 (252 aa).

Residues 138–163 (VTSDYHSGSSSSDEDTSKEVDVKPSS) are disordered.

This sequence belongs to the BTG family. As to expression, ubiquitous.

Overexpression impairs serum-induced cell cycle progression from the G0/G1 to S phase. This is Protein BTG3 (Btg3) from Mus musculus (Mouse).